A 456-amino-acid polypeptide reads, in one-letter code: Putative dihydroorotase (456 aa).

It belongs to the metallo-dependent hydrolases superfamily. DHOase family. Class I DHOase subfamily.

It carries out the reaction (S)-dihydroorotate + H2O = N-carbamoyl-L-aspartate + H(+). It functions in the pathway pyrimidine metabolism; UMP biosynthesis via de novo pathway; (S)-dihydroorotate from bicarbonate: step 3/3. Its function is as follows. Catalyzes the reversible cyclization of carbamoyl aspartate to dihydroorotate. The polypeptide is Putative dihydroorotase (Rhodopirellula baltica (strain DSM 10527 / NCIMB 13988 / SH1)).